Reading from the N-terminus, the 173-residue chain is Large ribosomal subunit protein uL10 (173 aa).

Belongs to the universal ribosomal protein uL10 family. In terms of assembly, part of the ribosomal stalk of the 50S ribosomal subunit. The N-terminus interacts with L11 and the large rRNA to form the base of the stalk. The C-terminus forms an elongated spine to which L12 dimers bind in a sequential fashion forming a multimeric L10(L12)X complex.

In terms of biological role, forms part of the ribosomal stalk, playing a central role in the interaction of the ribosome with GTP-bound translation factors. The sequence is that of Large ribosomal subunit protein uL10 from Maridesulfovibrio salexigens (strain ATCC 14822 / DSM 2638 / NCIMB 8403 / VKM B-1763) (Desulfovibrio salexigens).